The sequence spans 159 residues: Transcription elongation factor GreA (159 aa).

Residues 5 to 77 (REVVLTAQGL…LETMLRKAVI (73 aa)) are a coiled coil.

Belongs to the GreA/GreB family.

Functionally, necessary for efficient RNA polymerase transcription elongation past template-encoded arresting sites. The arresting sites in DNA have the property of trapping a certain fraction of elongating RNA polymerases that pass through, resulting in locked ternary complexes. Cleavage of the nascent transcript by cleavage factors such as GreA or GreB allows the resumption of elongation from the new 3'terminus. GreA releases sequences of 2 to 3 nucleotides. The chain is Transcription elongation factor GreA from Alkaliphilus oremlandii (strain OhILAs) (Clostridium oremlandii (strain OhILAs)).